Reading from the N-terminus, the 118-residue chain is Ribonuclease P protein component (118 aa).

The protein belongs to the RnpA family. Consists of a catalytic RNA component (M1 or rnpB) and a protein subunit.

The catalysed reaction is Endonucleolytic cleavage of RNA, removing 5'-extranucleotides from tRNA precursor.. Its function is as follows. RNaseP catalyzes the removal of the 5'-leader sequence from pre-tRNA to produce the mature 5'-terminus. It can also cleave other RNA substrates such as 4.5S RNA. The protein component plays an auxiliary but essential role in vivo by binding to the 5'-leader sequence and broadening the substrate specificity of the ribozyme. The sequence is that of Ribonuclease P protein component from Levilactobacillus brevis (strain ATCC 367 / BCRC 12310 / CIP 105137 / JCM 1170 / LMG 11437 / NCIMB 947 / NCTC 947) (Lactobacillus brevis).